The primary structure comprises 247 residues: tRNA pseudouridine synthase A 1 (247 aa).

Aspartate 53 (nucleophile) is an active-site residue. Tyrosine 111 contributes to the substrate binding site.

The protein belongs to the tRNA pseudouridine synthase TruA family. As to quaternary structure, homodimer.

The enzyme catalyses uridine(38/39/40) in tRNA = pseudouridine(38/39/40) in tRNA. Its function is as follows. Formation of pseudouridine at positions 38, 39 and 40 in the anticodon stem and loop of transfer RNAs. In Bacillus cereus (strain ATCC 14579 / DSM 31 / CCUG 7414 / JCM 2152 / NBRC 15305 / NCIMB 9373 / NCTC 2599 / NRRL B-3711), this protein is tRNA pseudouridine synthase A 1.